The following is a 285-amino-acid chain: MSQQHTLPVTLPPALSQGPLKPESPPIDTQQEQVKQPTSLPVLCQKMPSSLPGKVPLGHGEKHTSLVKGEPEQQCEPQEQEQQQKQQESQEQKLHLEQCLEQHQEQQESQDQKLYPEQCLEQQQEQQESQDQKLYPEQCLEQQQEQQESQEKELHLEQEQQKEELQQQEQQQGKEQCEKHQEAKNLEQQLEQIGAQRKQQQKEQLEQEKKLVDQHLDQEPAQRTEQPEKKEEQVLEQQGQQEGQLEQPAFVPAQVQVREPLKGEVLPLIEQQHQKQEVHDPPEHQ.

3 disordered regions span residues 1 to 93, 120 to 256, and 266 to 285; these read MSQQ…QEQK, LEQQ…AQVQ, and LPLI…PEHQ. Over residues 27–39 the composition is skewed to polar residues; the sequence is IDTQQEQVKQPTS. Composition is skewed to low complexity over residues 72–87, 120–129, and 137–147; these read EQQC…QKQQ, LEQQQEQQES, and EQCLEQQQEQQ. Composition is skewed to basic and acidic residues over residues 149–165, 175–185, and 200–233; these read SQEK…KEEL, EQCEKHQEAKN, and QQKE…KEEQ. Residues 235 to 248 show a composition bias toward low complexity; it reads LEQQGQQEGQLEQP. Residues 272–285 show a composition bias toward basic and acidic residues; sequence QHQKQEVHDPPEHQ.

Belongs to the involucrin family. In terms of assembly, directly or indirectly cross-linked to cornifelin (CNFN). Post-translationally, substrate of transglutaminase. Specific glutamines or lysines are cross-linked to keratins, desmoplakin and to inter involucrin molecules. Keratinocytes of epidermis and other stratified squamous epithelia.

It localises to the cytoplasm. Part of the insoluble cornified cell envelope (CE) of stratified squamous epithelia. The sequence is that of Involucrin (IVL) from Canis lupus familiaris (Dog).